Here is a 198-residue protein sequence, read N- to C-terminus: Peptidyl-tRNA hydrolase (198 aa).

Tyrosine 16 contributes to the tRNA binding site. The active-site Proton acceptor is the histidine 21. Residues phenylalanine 67, asparagine 69, and asparagine 115 each coordinate tRNA.

It belongs to the PTH family. Monomer.

Its subcellular location is the cytoplasm. The catalysed reaction is an N-acyl-L-alpha-aminoacyl-tRNA + H2O = an N-acyl-L-amino acid + a tRNA + H(+). Hydrolyzes ribosome-free peptidyl-tRNAs (with 1 or more amino acids incorporated), which drop off the ribosome during protein synthesis, or as a result of ribosome stalling. Functionally, catalyzes the release of premature peptidyl moieties from peptidyl-tRNA molecules trapped in stalled 50S ribosomal subunits, and thus maintains levels of free tRNAs and 50S ribosomes. The chain is Peptidyl-tRNA hydrolase from Prochlorococcus marinus (strain MIT 9301).